The sequence spans 548 residues: Thermolysin (548 aa).

The first 28 residues, 1 to 28 (MKMKMKLASFGLAAGLAAQVFLPYNALA), serve as a signal peptide directing secretion. A propeptide spans 29–232 (STEHVTWNQQ…DAAKPGDVKS (204 aa)) (activation peptide). Asp289, Asp291, Gln293, and Asp370 together coordinate Ca(2+). His374 is a Zn(2+) binding site. The active site involves Glu375. Zn(2+)-binding residues include His378 and Glu398. The Ca(2+) site is built by Glu409, Asn415, Asp417, Glu419, Glu422, Tyr425, Thr426, Ile429, and Asp432. Catalysis depends on His463, which acts as the Proton donor.

It belongs to the peptidase M4 family. Ca(2+) serves as cofactor. Zn(2+) is required as a cofactor.

The protein localises to the secreted. It catalyses the reaction Preferential cleavage: Xaa-|-Leu &gt; Xaa-|-Phe.. Extracellular zinc metalloprotease. The sequence is that of Thermolysin (npr) from Bacillus thermoproteolyticus.